We begin with the raw amino-acid sequence, 122 residues long: MARIAGVNIPTNKRVIIALQYIHGIGAKNAEEIVTKVGIPAERRVNQLTDQEVLQIRETIDRDYVVEGDLRREVAMNIKRLMDLGCYRGLRHRRGLPVRGQRTHTNARTRKGPAKPIAGKKK.

The tract at residues 95 to 122 is disordered; it reads GLPVRGQRTHTNARTRKGPAKPIAGKKK.

Belongs to the universal ribosomal protein uS13 family. In terms of assembly, part of the 30S ribosomal subunit. Forms a loose heterodimer with protein S19. Forms two bridges to the 50S subunit in the 70S ribosome.

In terms of biological role, located at the top of the head of the 30S subunit, it contacts several helices of the 16S rRNA. In the 70S ribosome it contacts the 23S rRNA (bridge B1a) and protein L5 of the 50S subunit (bridge B1b), connecting the 2 subunits; these bridges are implicated in subunit movement. Contacts the tRNAs in the A and P-sites. In Xanthobacter autotrophicus (strain ATCC BAA-1158 / Py2), this protein is Small ribosomal subunit protein uS13.